A 781-amino-acid chain; its full sequence is Toll-like receptor 2 type-2 (781 aa).

Residues 1–24 (MHTWKMWAICTALAAHLPEEQALR) form the signal peptide. Topologically, residues 25-585 (QACLSCDATQ…QLSLMECHRS (561 aa)) are extracellular. C30 and C36 form a disulfide bridge. N-linked (GlcNAc...) asparagine glycosylation is present at N37. LRR repeat units follow at residues 53 to 74 (KITV…DLQK), 77 to 98 (NLRT…SFGS), 101 to 122 (KLEL…WFGP), 125 to 146 (SLQH…SPFS), 150 to 171 (NLSS…NFEG), and 174 to 195 (FLNT…SLKS). An N-linked (GlcNAc...) asparagine glycan is attached at N109. N-linked (GlcNAc...) asparagine glycans are attached at residues N150, N184, N301, and N313. An intrachain disulfide couples C350 to C379. 7 LRR repeats span residues 358-378 (SLEY…EHSA), 385-406 (SLQT…GKSL), 411-432 (NLNL…CEWP), 434-455 (NLKY…IPST), 456-474 (LEVL…LQLP), 475-496 (FLKE…TDIP), and 497-518 (NLVA…EFES). N-linked (GlcNAc...) asparagine glycosylation is present at N390. Residues C429 and C451 are joined by a disulfide bond. A glycan (N-linked (GlcNAc...) asparagine) is linked at N439. The LRRCT domain maps to 530–584 (NNFICSCEFLSFIHHEAGIAQVLVGWPESYICDSPLTVRGAQVGSVQLSLMECHR). The helical transmembrane segment at 586-606 (LLVSLICTLVFLFILILVVVG) threads the bilayer. Topologically, residues 607-781 (YKYHAVWYMR…WENLKAALKS (175 aa)) are cytoplasmic. A TIR domain is found at 636–779 (ICYDAFVSYS…MFWENLKAAL (144 aa)).

Belongs to the Toll-like receptor family. Binds MYD88 (via TIR domain). N-glycosylated. As to expression, highly expressed in ovary. Also detected in brain, heart, lung, liver, spleen and kidney, and at low levels in gizzard, muscle, testis and proventriculus.

It localises to the membrane. Participates in the innate immune response to microbial agents. Acts via MYD88 and TRAF6, leading to NF-kappa-B activation, cytokine secretion and the inflammatory response. Mediates the response to mycoplasmal macrophage-activating lipopeptide-2kD (MALP-2). In Gallus gallus (Chicken), this protein is Toll-like receptor 2 type-2 (TLR2-2).